Reading from the N-terminus, the 100-residue chain is MTERFQGRLADVIRRPLITEKATRALEINQYTFEVDHRAAKPDIKAAIEQLFDVKVTGISTMNPPRRSRRMGRFAGKRAQVKKAVVRLAEGNSIQLFPES.

Belongs to the universal ribosomal protein uL23 family. Part of the 50S ribosomal subunit. Contacts protein L29, and trigger factor when it is bound to the ribosome.

Functionally, one of the early assembly proteins it binds 23S rRNA. One of the proteins that surrounds the polypeptide exit tunnel on the outside of the ribosome. Forms the main docking site for trigger factor binding to the ribosome. In Synechococcus sp. (strain CC9605), this protein is Large ribosomal subunit protein uL23.